The sequence spans 126 residues: Fluoride-specific ion channel FluC (126 aa).

The next 4 helical transmembrane spans lie at 3–23 (PLGFVAVGIGAAVGAWLRWGL), 36–56 (YGTLAANLLGGYLIGLAVGFF), 68–88 (LLAITGFLGGLTTFSTFSSEA), and 99–119 (WALLHLLSHLGGSLLFAALGL). Residues glycine 76 and threonine 79 each coordinate Na(+).

It belongs to the fluoride channel Fluc/FEX (TC 1.A.43) family.

The protein resides in the cell inner membrane. The enzyme catalyses fluoride(in) = fluoride(out). With respect to regulation, na(+) is not transported, but it plays an essential structural role and its presence is essential for fluoride channel function. Its function is as follows. Fluoride-specific ion channel. Important for reducing fluoride concentration in the cell, thus reducing its toxicity. The sequence is that of Fluoride-specific ion channel FluC from Cupriavidus pinatubonensis (strain JMP 134 / LMG 1197) (Cupriavidus necator (strain JMP 134)).